The chain runs to 607 residues: Fucose-1-phosphate guanylyltransferase (607 aa).

The interval 1-21 (MRAVRRGLREGGAMAAARDPP) is disordered.

Expressed in many tissues.

The protein resides in the cytoplasm. The catalysed reaction is beta-L-fucose 1-phosphate + GTP + H(+) = GDP-beta-L-fucose + diphosphate. Functionally, catalyzes the formation of GDP-L-fucose from GTP and L-fucose-1-phosphate. Functions as a salvage pathway to reutilize L-fucose arising from the turnover of glycoproteins and glycolipids. The protein is Fucose-1-phosphate guanylyltransferase of Homo sapiens (Human).